The chain runs to 137 residues: Small ribosomal subunit protein uS9 (137 aa).

The segment covering 105-117 (LKIEGHLSRDPRA) has biased composition (basic and acidic residues). Residues 105-137 (LKIEGHLSRDPRAKERRKYGLKKARKAPQFSKR) form a disordered region. A compositionally biased stretch (basic residues) spans 118–137 (KERRKYGLKKARKAPQFSKR).

This sequence belongs to the universal ribosomal protein uS9 family.

In Prochlorococcus marinus (strain MIT 9211), this protein is Small ribosomal subunit protein uS9.